We begin with the raw amino-acid sequence, 185 residues long: Ribosome-recycling factor (185 aa).

This sequence belongs to the RRF family.

The protein localises to the cytoplasm. Functionally, responsible for the release of ribosomes from messenger RNA at the termination of protein biosynthesis. May increase the efficiency of translation by recycling ribosomes from one round of translation to another. The sequence is that of Ribosome-recycling factor from Enterococcus faecalis (strain ATCC 700802 / V583).